Reading from the N-terminus, the 242-residue chain is Uridylate kinase (242 aa).

Position 11 to 14 (11 to 14 (KLSG)) interacts with ATP. Positions 19–24 (GEKGAG) are involved in allosteric activation by GTP. G53 contributes to the UMP binding site. Residues G54 and R58 each coordinate ATP. Residues D73 and 134–141 (IGSPYFST) contribute to the UMP site. ATP-binding residues include N162, Y168, and D171.

Belongs to the UMP kinase family. Homohexamer.

It is found in the cytoplasm. It catalyses the reaction UMP + ATP = UDP + ADP. Its pathway is pyrimidine metabolism; CTP biosynthesis via de novo pathway; UDP from UMP (UMPK route): step 1/1. With respect to regulation, allosterically activated by GTP. Inhibited by UTP. In terms of biological role, catalyzes the reversible phosphorylation of UMP to UDP. The chain is Uridylate kinase from Streptococcus pyogenes serotype M2 (strain MGAS10270).